The primary structure comprises 369 residues: UDP-N-acetylglucosamine--N-acetylmuramyl-(pentapeptide) pyrophosphoryl-undecaprenol N-acetylglucosamine transferase (369 aa).

UDP-N-acetyl-alpha-D-glucosamine contacts are provided by residues 16–18, Asn130, Arg171, Ser196, and Gln297; that span reads TGG.

Belongs to the glycosyltransferase 28 family. MurG subfamily.

It is found in the cell inner membrane. It carries out the reaction di-trans,octa-cis-undecaprenyl diphospho-N-acetyl-alpha-D-muramoyl-L-alanyl-D-glutamyl-meso-2,6-diaminopimeloyl-D-alanyl-D-alanine + UDP-N-acetyl-alpha-D-glucosamine = di-trans,octa-cis-undecaprenyl diphospho-[N-acetyl-alpha-D-glucosaminyl-(1-&gt;4)]-N-acetyl-alpha-D-muramoyl-L-alanyl-D-glutamyl-meso-2,6-diaminopimeloyl-D-alanyl-D-alanine + UDP + H(+). The protein operates within cell wall biogenesis; peptidoglycan biosynthesis. Its function is as follows. Cell wall formation. Catalyzes the transfer of a GlcNAc subunit on undecaprenyl-pyrophosphoryl-MurNAc-pentapeptide (lipid intermediate I) to form undecaprenyl-pyrophosphoryl-MurNAc-(pentapeptide)GlcNAc (lipid intermediate II). The polypeptide is UDP-N-acetylglucosamine--N-acetylmuramyl-(pentapeptide) pyrophosphoryl-undecaprenol N-acetylglucosamine transferase (Desulfotalea psychrophila (strain LSv54 / DSM 12343)).